The chain runs to 210 residues: tRNA (guanine-N(7)-)-methyltransferase (210 aa).

Residues glutamate 36, glutamate 61, aspartate 90, and aspartate 112 each contribute to the S-adenosyl-L-methionine site. Aspartate 112 is a catalytic residue. Substrate contacts are provided by residues lysine 116, aspartate 148, and 188 to 191; that span reads TEYE.

Belongs to the class I-like SAM-binding methyltransferase superfamily. TrmB family.

The enzyme catalyses guanosine(46) in tRNA + S-adenosyl-L-methionine = N(7)-methylguanosine(46) in tRNA + S-adenosyl-L-homocysteine. It functions in the pathway tRNA modification; N(7)-methylguanine-tRNA biosynthesis. Its function is as follows. Catalyzes the formation of N(7)-methylguanine at position 46 (m7G46) in tRNA. This Mycoplasma genitalium (strain ATCC 33530 / DSM 19775 / NCTC 10195 / G37) (Mycoplasmoides genitalium) protein is tRNA (guanine-N(7)-)-methyltransferase.